We begin with the raw amino-acid sequence, 87 residues long: Small ribosomal subunit protein uS17 (87 aa).

Belongs to the universal ribosomal protein uS17 family. Part of the 30S ribosomal subunit.

One of the primary rRNA binding proteins, it binds specifically to the 5'-end of 16S ribosomal RNA. This Exiguobacterium sibiricum (strain DSM 17290 / CCUG 55495 / CIP 109462 / JCM 13490 / 255-15) protein is Small ribosomal subunit protein uS17.